We begin with the raw amino-acid sequence, 914 residues long: Protein ECT2 (914 aa).

Ala-2 carries the post-translational modification N-acetylalanine. BRCT domains follow at residues 171-260 (LYCT…AAVD) and 266-354 (FKVP…MYLY). Thr-359 carries the phosphothreonine; by PKC/PRKCI modification. Ser-367 and Ser-370 each carry phosphoserine. A Phosphothreonine; by CDK1 modification is found at Thr-373. Position 376 is a phosphoserine (Ser-376). 2 consecutive short sequence motifs (nuclear localization signal) follow at residues 378–382 (RKRRR) and 401–405 (PRKRP). The segment at 388–449 (AQLSRETDVS…SKSSTPVPSK (62 aa)) is disordered. Positions 418–429 (DISNTPESSINY) are enriched in polar residues. The span at 432–449 (TPKSCTKSSKSSTPVPSK) shows a compositional bias: low complexity. Thr-444 carries the phosphothreonine; by CDK1 modification. Residues 452 to 641 (ARWQVAKELY…KEVMTHINED (190 aa)) form the DH domain. Lys-611 participates in a covalent cross-link: Glycyl lysine isopeptide (Lys-Gly) (interchain with G-Cter in SUMO2). Residues 675–794 (RVETISLGEH…KMLCRHVANT (120 aa)) enclose the PH domain. Phosphoserine occurs at positions 716 and 842. Thr-846 carries the phosphothreonine; by CDK1 modification. Residues 857–884 (TSHGSVEGRSPSSNDKHVMSRLSSTSSL) form a disordered region. Phosphoserine is present on residues Ser-861 and Ser-866.

Homodimer. Homooligomer. Found in the centralspindlin complex. Interacts with NR1I3. Interacts (Thr-359 phosphorylated form) with PARD6A; the interaction is observed in cancer cells. Interacts (Thr-359 phosphorylated form) with PRKCI; the interaction is observed in cancer cells. Interacts with PKP4; the interaction is observed at the midbody. Interacts with RACGAP1/CYK4; the interaction is direct, occurs in a microtubule-dependent manner, occurs at anaphase and during cytokinesis, is inhibited in metaphase by phosphorylation of ECT2 on Thr-373 and is stimulated in early anaphase by dephosphorylation of ECT2 probably on Thr-373 through CDK1 activity. Interacts with PLK1; the interaction is stimulated upon its phosphorylation on Thr-444. Interacts with RHOA; the interaction results in allosteric activation of ECT2. Interacts with KIF23, PARD3, PARD6B and PRKCQ. Interacts with NEDD9/HEF1. Post-translationally, phosphorylated by PLK1 in vitro. Hyperphosphorylated during the G2 phase of the cell cycle. Phosphorylation at Thr-373 occurs during the G2/M phase, relieves its auto-inhibition status and stimulates its GEF activity. Phosphorylation at Thr-444 in G2/M phase is required for subsequent binding with PLK1 and Rho exchange activation. Dephosphorylated at the time of cytokinesis. Phosphorylation at Thr-359 is required for its transformation activity in cancer cells. In terms of tissue distribution, expressed in lung epithelial cells (at protein level). Expressed in squamous cell carcinoma, primary non-small cell lung cancer tumors and lung adenocarcinoma.

The protein localises to the nucleus. The protein resides in the cytoplasm. It localises to the cytoskeleton. It is found in the spindle. Its subcellular location is the cleavage furrow. The protein localises to the midbody. The protein resides in the cell junction. It localises to the tight junction. It is found in the microtubule organizing center. Its subcellular location is the centrosome. Its activity is regulated as follows. Autoinhibited by the C-terminal PH domain which folds back and binds to the surface of the DH domain, blocking binding of RHOA to the catalytic center of the DH domain. The 2nd BRCT domain is also involved in inhibition, probably by helping to impede RHOA binding. Allosterically activated by binding of activated GTP-bound RHOA to the PH domain which stimulates the release of PH inhibition and promotes the binding of substrate RHOA to the catalytic center. Binding of phosphorylated RACGAP1 to the N-terminal BRCT domain-containing region also releases autoinhibition. Functionally, guanine nucleotide exchange factor (GEF) that catalyzes the exchange of GDP for GTP. Promotes guanine nucleotide exchange on the Rho family members of small GTPases, like RHOA, RHOC, RAC1 and CDC42. Required for signal transduction pathways involved in the regulation of cytokinesis. Component of the centralspindlin complex that serves as a microtubule-dependent and Rho-mediated signaling required for the myosin contractile ring formation during the cell cycle cytokinesis. Regulates the translocation of RHOA from the central spindle to the equatorial region. Plays a role in the control of mitotic spindle assembly; regulates the activation of CDC42 in metaphase for the process of spindle fibers attachment to kinetochores before chromosome congression. Involved in the regulation of epithelial cell polarity; participates in the formation of epithelial tight junctions in a polarity complex PARD3-PARD6-protein kinase PRKCQ-dependent manner. Plays a role in the regulation of neurite outgrowth. Inhibits phenobarbital (PB)-induced NR1I3 nuclear translocation. Stimulates the activity of RAC1 through its association with the oncogenic PARD6A-PRKCI complex in cancer cells, thereby acting to coordinately drive tumor cell proliferation and invasion. Also stimulates genotoxic stress-induced RHOB activity in breast cancer cells leading to their cell death. The protein is Protein ECT2 of Homo sapiens (Human).